Reading from the N-terminus, the 218-residue chain is Ribosomal RNA small subunit methyltransferase G (218 aa).

S-adenosyl-L-methionine is bound by residues Gly82, Leu87, 137-138 (VE), and Arg152.

This sequence belongs to the methyltransferase superfamily. RNA methyltransferase RsmG family.

The protein localises to the cytoplasm. The catalysed reaction is guanosine(527) in 16S rRNA + S-adenosyl-L-methionine = N(7)-methylguanosine(527) in 16S rRNA + S-adenosyl-L-homocysteine. Specifically methylates the N7 position of guanine in position 527 of 16S rRNA. The sequence is that of Ribosomal RNA small subunit methyltransferase G from Herminiimonas arsenicoxydans.